Consider the following 162-residue polypeptide: uncharacterized protein (162 aa).

This is an uncharacterized protein from Sputnik virophage.